Consider the following 189-residue polypeptide: dCTP deaminase (189 aa).

DCTP-binding positions include 112–117 (KSTYAR), 136–138 (TLE), glutamine 157, tyrosine 171, and glutamine 181. The active-site Proton donor/acceptor is glutamate 138.

This sequence belongs to the dCTP deaminase family. In terms of assembly, homotrimer.

It carries out the reaction dCTP + H2O + H(+) = dUTP + NH4(+). It participates in pyrimidine metabolism; dUMP biosynthesis; dUMP from dCTP (dUTP route): step 1/2. Catalyzes the deamination of dCTP to dUTP. The protein is dCTP deaminase of Albidiferax ferrireducens (strain ATCC BAA-621 / DSM 15236 / T118) (Rhodoferax ferrireducens).